Consider the following 453-residue polypeptide: Glutamyl-tRNA reductase (453 aa).

Substrate contacts are provided by residues 50–53 (TCNR), serine 110, 115–117 (EPQ), and glutamine 121. The Nucleophile role is filled by cysteine 51. 190-195 (GAGEMA) serves as a coordination point for NADP(+). Over residues 423-436 (REKVPTDAHADRKP) the composition is skewed to basic and acidic residues. The tract at residues 423–453 (REKVPTDAHADRKPPNFAETSDDFDVTDASE) is disordered. The span at 442–453 (TSDDFDVTDASE) shows a compositional bias: acidic residues.

This sequence belongs to the glutamyl-tRNA reductase family. As to quaternary structure, homodimer.

The catalysed reaction is (S)-4-amino-5-oxopentanoate + tRNA(Glu) + NADP(+) = L-glutamyl-tRNA(Glu) + NADPH + H(+). It functions in the pathway porphyrin-containing compound metabolism; protoporphyrin-IX biosynthesis; 5-aminolevulinate from L-glutamyl-tRNA(Glu): step 1/2. In terms of biological role, catalyzes the NADPH-dependent reduction of glutamyl-tRNA(Glu) to glutamate 1-semialdehyde (GSA). The protein is Glutamyl-tRNA reductase of Solidesulfovibrio magneticus (strain ATCC 700980 / DSM 13731 / RS-1) (Desulfovibrio magneticus).